Consider the following 141-residue polypeptide: ATP synthase epsilon chain (141 aa).

This sequence belongs to the ATPase epsilon chain family. As to quaternary structure, F-type ATPases have 2 components, CF(1) - the catalytic core - and CF(0) - the membrane proton channel. CF(1) has five subunits: alpha(3), beta(3), gamma(1), delta(1), epsilon(1). CF(0) has three main subunits: a, b and c.

Its subcellular location is the cell membrane. Its function is as follows. Produces ATP from ADP in the presence of a proton gradient across the membrane. This is ATP synthase epsilon chain from Lactococcus lactis subsp. cremoris (strain SK11).